Here is a 483-residue protein sequence, read N- to C-terminus: Dual specificity protein phosphatase 10 (483 aa).

One can recognise a Rhodanese domain in the interval 169–286 (PSQGPVIIDC…FKQNHGNLCD (118 aa)). The tract at residues 200–216 (KISRRRLQQGKITVLDL) is interaction with MAP kinases. The Tyrosine-protein phosphatase domain occupies 322–465 (ELTPILPFLF…LLEFEEDLNN (144 aa)). Cys409 functions as the Phosphocysteine intermediate in the catalytic mechanism.

The protein belongs to the protein-tyrosine phosphatase family. Non-receptor class dual specificity subfamily. Monomer. Interacts with MAPK14.

The protein localises to the cytoplasm. The protein resides in the nucleus. The enzyme catalyses O-phospho-L-tyrosyl-[protein] + H2O = L-tyrosyl-[protein] + phosphate. The catalysed reaction is O-phospho-L-seryl-[protein] + H2O = L-seryl-[protein] + phosphate. It catalyses the reaction O-phospho-L-threonyl-[protein] + H2O = L-threonyl-[protein] + phosphate. Its function is as follows. Protein phosphatase involved in the inactivation of MAP kinases. Has a specificity for the MAPK11/MAPK12/MAPK13/MAPK14 subfamily. It preferably dephosphorylates p38. The polypeptide is Dual specificity protein phosphatase 10 (Dusp10) (Mus musculus (Mouse)).